The primary structure comprises 309 residues: Aspartate carbamoyltransferase catalytic subunit (309 aa).

Residues arginine 55 and threonine 56 each coordinate carbamoyl phosphate. Lysine 85 serves as a coordination point for L-aspartate. 3 residues coordinate carbamoyl phosphate: arginine 106, histidine 135, and glutamine 138. Residues arginine 168 and arginine 230 each contribute to the L-aspartate site. 2 residues coordinate carbamoyl phosphate: leucine 268 and proline 269.

The protein belongs to the aspartate/ornithine carbamoyltransferase superfamily. ATCase family. As to quaternary structure, heterododecamer (2C3:3R2) of six catalytic PyrB chains organized as two trimers (C3), and six regulatory PyrI chains organized as three dimers (R2).

The enzyme catalyses carbamoyl phosphate + L-aspartate = N-carbamoyl-L-aspartate + phosphate + H(+). The protein operates within pyrimidine metabolism; UMP biosynthesis via de novo pathway; (S)-dihydroorotate from bicarbonate: step 2/3. Its function is as follows. Catalyzes the condensation of carbamoyl phosphate and aspartate to form carbamoyl aspartate and inorganic phosphate, the committed step in the de novo pyrimidine nucleotide biosynthesis pathway. The polypeptide is Aspartate carbamoyltransferase catalytic subunit (Photobacterium profundum (strain SS9)).